The chain runs to 41 residues: Large ribosomal subunit protein bL36 (41 aa).

The protein belongs to the bacterial ribosomal protein bL36 family.

This is Large ribosomal subunit protein bL36 from Methylobacterium nodulans (strain LMG 21967 / CNCM I-2342 / ORS 2060).